The sequence spans 201 residues: Putative 3-methyladenine DNA glycosylase (201 aa).

This sequence belongs to the DNA glycosylase MPG family.

This Nitrosococcus oceani (strain ATCC 19707 / BCRC 17464 / JCM 30415 / NCIMB 11848 / C-107) protein is Putative 3-methyladenine DNA glycosylase.